A 186-amino-acid chain; its full sequence is Agglutinin isolectin 3 (186 aa).

A Pyrrolidone carboxylic acid modification is found at Gln1. 4 Chitin-binding type-1 domains span residues 1–42 (QRCG…ACWT), 43–85 (SKRC…PCRA), 86–128 (DIKC…ACST), and 129–171 (DKPC…GCDG). Cystine bridges form between Cys3/Cys18, Cys12/Cys24, Cys17/Cys31, Cys35/Cys40, Cys46/Cys61, Cys55/Cys67, Cys60/Cys74, Cys78/Cys83, Cys89/Cys104, Cys98/Cys110, Cys103/Cys117, Cys121/Cys126, Cys132/Cys147, Cys141/Cys153, Cys146/Cys160, and Cys164/Cys169. A substrate-binding site is contributed by 10–12 (MEC). 62–73 (SQYGHCGFGAEY) lines the substrate pocket. 114–115 (SE) serves as a coordination point for substrate. Positions 172 to 186 (VFAEAIATNSTLLAE) are excised as a propeptide. Residue Asn180 is glycosylated (N-linked (GlcNAc...) asparagine).

As to quaternary structure, homodimer, u-shaped.

Functionally, N-acetyl-D-glucosamine / N-acetyl-D-neuraminic acid binding lectin. This Triticum aestivum (Wheat) protein is Agglutinin isolectin 3.